A 220-amino-acid chain; its full sequence is Response regulator ArlR (220 aa).

In terms of domain architecture, Response regulatory spans 3 to 116; the sequence is KILIVEDEQN…ELLARIRAML (114 aa). Asp-52 is modified (4-aspartylphosphate). Positions 122 to 220 form a DNA-binding region, ompR/PhoB-type; that stretch reads KNLIDIKGII…VRGVGYVVRQ (99 aa).

In terms of processing, phosphorylated by ArlS.

It localises to the cytoplasm. In terms of biological role, member of the two-component regulatory system ArlS/ArlR. This chain is Response regulator ArlR (arlR), found in Staphylococcus saprophyticus subsp. saprophyticus (strain ATCC 15305 / DSM 20229 / NCIMB 8711 / NCTC 7292 / S-41).